Here is a 474-residue protein sequence, read N- to C-terminus: Probable phenylalanine--tRNA ligase alpha subunit (474 aa).

The interval methionine 1–glutamate 150 is contains the major tRNA-Phe binding sites. Residues threonine 308, glutamine 350–glutamate 352, and tyrosine 390 each bind L-phenylalanine. Glutamate 392 lines the Mg(2+) pocket. Phenylalanine 416 lines the L-phenylalanine pocket.

It belongs to the class-II aminoacyl-tRNA synthetase family. Phe-tRNA synthetase alpha subunit type 2 subfamily. Tetramer of two alpha and two beta subunits. It depends on Mg(2+) as a cofactor.

The protein localises to the cytoplasm. The enzyme catalyses tRNA(Phe) + L-phenylalanine + ATP = L-phenylalanyl-tRNA(Phe) + AMP + diphosphate + H(+). This Vairimorpha ceranae (strain BRL01) (Microsporidian parasite) protein is Probable phenylalanine--tRNA ligase alpha subunit.